We begin with the raw amino-acid sequence, 207 residues long: Large ribosomal subunit protein uL4 (207 aa).

A disordered region spans residues 50-75 (KTKTVSEVSGTTKKPFKQKGTGNARQ).

Belongs to the universal ribosomal protein uL4 family. As to quaternary structure, part of the 50S ribosomal subunit.

One of the primary rRNA binding proteins, this protein initially binds near the 5'-end of the 23S rRNA. It is important during the early stages of 50S assembly. It makes multiple contacts with different domains of the 23S rRNA in the assembled 50S subunit and ribosome. Its function is as follows. Forms part of the polypeptide exit tunnel. The sequence is that of Large ribosomal subunit protein uL4 from Rickettsia akari (strain Hartford).